A 400-amino-acid polypeptide reads, in one-letter code: Succinate--glutarate CoA-transferase (400 aa).

The active-site Nucleophile is the Asp-181.

The protein belongs to the CoA-transferase III family.

It catalyses the reaction glutarate + succinyl-CoA = glutaryl-CoA + succinate. It functions in the pathway amino-acid degradation. The protein operates within cofactor biosynthesis; biotin biosynthesis. Is involved in L-lysine degradation and provides glutaryl-CoA for biotin synthesis. Catalyzes the conversion of glutarate to glutaryl-CoA via the transfer of CoA from succinyl-CoA. This is Succinate--glutarate CoA-transferase from Agrobacterium fabrum (strain C58 / ATCC 33970) (Agrobacterium tumefaciens (strain C58)).